Reading from the N-terminus, the 329-residue chain is MWGLKVLLLPVVSFALHPEEILDTQWELWKKTYSKQYNSKVDEISRRLIWEKNLKHISIHNLEASLGVHTYELAMNHLGDMTSEEVVQKMTGLKVPPSRSHSNDTLYIPDWEGRTPDSIDYRKKGYVTPVKNQGQCGSCWAFSSVGALEGQLKKKTGKLLNLSPQNLVDCVSENYGCGGGYMTNAFQYVQRNRGIDSEDAYPYVGQDESCMYNPTGKAAKCRGYREIPEGNEKALKRAVARVGPVSVAIDASLTSFQFYSKGVYYDENCSSDNVNHAVLAVGYGIQKGNKHWIIKNSWGESWGNKGYILMARNKNNACGIANLASFPKM.

A signal peptide spans 1 to 15 (MWGLKVLLLPVVSFA). A propeptide spans 16–114 (LHPEEILDTQ…TLYIPDWEGR (99 aa)) (activation peptide). Asn-103 carries an N-linked (GlcNAc...) asparagine glycan. 2 disulfides stabilise this stretch: Cys-136/Cys-177 and Cys-170/Cys-210. The active site involves Cys-139. An N-linked (GlcNAc...) asparagine glycan is attached at Asn-268. Residues Cys-269 and Cys-318 are joined by a disulfide bond. Active-site residues include His-276 and Asn-296.

It belongs to the peptidase C1 family. In terms of tissue distribution, predominantly expressed in osteclasts (bones).

The protein resides in the lysosome. The protein localises to the secreted. Its subcellular location is the apical cell membrane. The enzyme catalyses Broad proteolytic activity. With small-molecule substrates and inhibitors, the major determinant of specificity is P2, which is preferably Leu, Met &gt; Phe, and not Arg.. In terms of biological role, thiol protease involved in osteoclastic bone resorption and may participate partially in the disorder of bone remodeling. Displays potent endoprotease activity against fibrinogen at acid pH. May play an important role in extracellular matrix degradation. Involved in the release of thyroid hormone thyroxine (T4) by limited proteolysis of TG/thyroglobulin in the thyroid follicle lumen. The protein is Cathepsin K (CTSK) of Oryctolagus cuniculus (Rabbit).